A 680-amino-acid polypeptide reads, in one-letter code: Probable potassium transport system protein Kup (680 aa).

12 helical membrane-spanning segments follow: residues 16–36 (IAGM…SPLY), 60–80 (ISLV…LIAL), 103–123 (WLVI…MLTP), 150–170 (EVII…KFGT), 177–197 (FGPI…MNLM), 222–242 (VGIL…ALYS), 255–275 (SWPY…VWLL), 302–322 (IPAI…LISG), 351–371 (LYIS…VFYF), 380–400 (AYGL…FHYL), 407–427 (WFLA…FFIA), and 432–452 (FMHG…IMFV).

This sequence belongs to the HAK/KUP transporter (TC 2.A.72) family.

It localises to the cell membrane. The enzyme catalyses K(+)(in) + H(+)(in) = K(+)(out) + H(+)(out). Functionally, transport of potassium into the cell. Likely operates as a K(+):H(+) symporter. This is Probable potassium transport system protein Kup from Latilactobacillus sakei subsp. sakei (strain 23K) (Lactobacillus sakei subsp. sakei).